The following is a 573-amino-acid chain: Urease subunit alpha (573 aa).

Residues His139, His141, and Lys222 each coordinate Ni(2+). Lys222 carries the post-translational modification N6-carboxylysine. Position 224 (His224) interacts with substrate. The Ni(2+) site is built by His251 and His277. His325 serves as the catalytic Proton donor. Ni(2+) is bound at residue Asp365.

Belongs to the metallo-dependent hydrolases superfamily. Urease alpha subunit family. Heterotrimer of UreA (gamma), UreB (beta) and UreC (alpha) subunits. Three heterotrimers associate to form the active enzyme. Ni cation is required as a cofactor. Carboxylation allows a single lysine to coordinate two nickel ions.

The protein resides in the cytoplasm. It catalyses the reaction urea + 2 H2O + H(+) = hydrogencarbonate + 2 NH4(+). Its pathway is nitrogen metabolism; urea degradation; CO(2) and NH(3) from urea (urease route): step 1/1. In Flavobacterium johnsoniae (strain ATCC 17061 / DSM 2064 / JCM 8514 / BCRC 14874 / CCUG 350202 / NBRC 14942 / NCIMB 11054 / UW101) (Cytophaga johnsonae), this protein is Urease subunit alpha.